A 237-amino-acid polypeptide reads, in one-letter code: Riboflavin kinase (237 aa).

The segment at 1 to 101 (MRLKIKAIWV…SRIFSSEPDV (101 aa)) is unknown. The tract at residues 102 to 237 (LELEGNVLKG…VKKQGMEGQK (136 aa)) is riboflavin kinase. 111 to 116 (GLGEGQ) contacts CDP. The Mg(2+) site is built by Thr-140 and Asn-142. FMN-binding residues include Thr-197 and Glu-205. CDP is bound at residue 210-213 (VKLR).

This sequence belongs to the archaeal riboflavin kinase family. Mg(2+) is required as a cofactor.

The catalysed reaction is riboflavin + CTP = CDP + FMN + H(+). The protein operates within cofactor biosynthesis; FMN biosynthesis; FMN from riboflavin (CTP route): step 1/1. Its function is as follows. Catalyzes the CTP-dependent phosphorylation of riboflavin (vitamin B2) to form flavin mononucleotide (FMN). This chain is Riboflavin kinase (ribK), found in Methanosarcina acetivorans (strain ATCC 35395 / DSM 2834 / JCM 12185 / C2A).